A 338-amino-acid chain; its full sequence is SPbeta prophage-derived uncharacterized protein YonB (338 aa).

This chain is SPbeta prophage-derived uncharacterized protein YonB (yonB), found in Bacillus subtilis (strain 168).